A 281-amino-acid polypeptide reads, in one-letter code: Ribosomal RNA small subunit methyltransferase A (281 aa).

Residues Asn21, Leu23, Gly48, Glu69, Asp92, and Asn113 each coordinate S-adenosyl-L-methionine.

It belongs to the class I-like SAM-binding methyltransferase superfamily. rRNA adenine N(6)-methyltransferase family. RsmA subfamily.

It is found in the cytoplasm. It catalyses the reaction adenosine(1518)/adenosine(1519) in 16S rRNA + 4 S-adenosyl-L-methionine = N(6)-dimethyladenosine(1518)/N(6)-dimethyladenosine(1519) in 16S rRNA + 4 S-adenosyl-L-homocysteine + 4 H(+). Functionally, specifically dimethylates two adjacent adenosines (A1518 and A1519) in the loop of a conserved hairpin near the 3'-end of 16S rRNA in the 30S particle. May play a critical role in biogenesis of 30S subunits. This chain is Ribosomal RNA small subunit methyltransferase A, found in Ralstonia nicotianae (strain ATCC BAA-1114 / GMI1000) (Ralstonia solanacearum).